We begin with the raw amino-acid sequence, 609 residues long: Alpha-glycerophosphate oxidase (609 aa).

21-49 (DLLVIGGGITGAGLTLQAAAAGMKVAVLE) contributes to the FAD binding site.

It belongs to the FAD-dependent glycerol-3-phosphate dehydrogenase family. It depends on FAD as a cofactor.

It localises to the cytoplasm. The enzyme catalyses sn-glycerol 3-phosphate + O2 = dihydroxyacetone phosphate + H2O2. The sequence is that of Alpha-glycerophosphate oxidase (glpO) from Lactococcus lactis subsp. lactis (strain IL1403) (Streptococcus lactis).